Here is a 666-residue protein sequence, read N- to C-terminus: tRNA 5-methylaminomethyl-2-thiouridine biosynthesis bifunctional protein MnmC (666 aa).

The interval 1–253 is tRNA (mnm(5)s(2)U34)-methyltransferase; that stretch reads MSSPFVPIIT…KRHMICAHYE (253 aa). The interval 283–666 is FAD-dependent cmnm(5)s(2)U34 oxidoreductase; that stretch reads VGGGLAGCFI…FLRKKIIQGP (384 aa).

It in the N-terminal section; belongs to the methyltransferase superfamily. tRNA (mnm(5)s(2)U34)-methyltransferase family. This sequence in the C-terminal section; belongs to the DAO family. FAD is required as a cofactor.

The protein localises to the cytoplasm. The catalysed reaction is 5-aminomethyl-2-thiouridine(34) in tRNA + S-adenosyl-L-methionine = 5-methylaminomethyl-2-thiouridine(34) in tRNA + S-adenosyl-L-homocysteine + H(+). Catalyzes the last two steps in the biosynthesis of 5-methylaminomethyl-2-thiouridine (mnm(5)s(2)U) at the wobble position (U34) in tRNA. Catalyzes the FAD-dependent demodification of cmnm(5)s(2)U34 to nm(5)s(2)U34, followed by the transfer of a methyl group from S-adenosyl-L-methionine to nm(5)s(2)U34, to form mnm(5)s(2)U34. This Legionella pneumophila subsp. pneumophila (strain Philadelphia 1 / ATCC 33152 / DSM 7513) protein is tRNA 5-methylaminomethyl-2-thiouridine biosynthesis bifunctional protein MnmC.